We begin with the raw amino-acid sequence, 257 residues long: Neuroendocrine secretory protein 55 (257 aa).

Positions Met-1 to Ala-46 are cleaved as a signal peptide. The interval Ser-61 to His-257 is disordered. Residues Ala-70–Ser-82 show a composition bias toward low complexity. Positions Glu-86 to Cys-103 are enriched in basic and acidic residues. Acidic residues predominate over residues Leu-104–Pro-139. Basic and acidic residues predominate over residues Glu-200–Arg-211. Residues Pro-227–Arg-237 show a composition bias toward basic residues.

This sequence belongs to the NESP55 family. In terms of processing, binds keratan sulfate chains. May be proteolytically processed to give rise to a number of active peptides.

It localises to the cytoplasmic vesicle. It is found in the secretory vesicle. The protein resides in the secreted. The protein is Neuroendocrine secretory protein 55 of Mus musculus (Mouse).